The following is a 622-amino-acid chain: Ferredoxin-fold anticodon-binding domain-containing protein 1 homolog (622 aa).

The FDX-ACB domain maps to 529–622; it reads LYPPCYVHDV…IQRQLHVSPR (94 aa).

This is Ferredoxin-fold anticodon-binding domain-containing protein 1 homolog (Fdxacb1) from Mus musculus (Mouse).